A 260-amino-acid chain; its full sequence is D-threitol dehydrogenase (260 aa).

Residue 21 to 50 (LVTGAASGIGAAIASAYATKGARIAAVDLN) participates in NAD(+) binding. Catalysis depends on Tyr166, which acts as the Proton acceptor. Lys170 is a binding site for NAD(+).

This sequence belongs to the short-chain dehydrogenases/reductases (SDR) family.

It carries out the reaction D-threitol + NAD(+) = D-erythrulose + NADH + H(+). The protein operates within carbohydrate metabolism; D-threitol degradation. Functionally, catalyzes the NAD-dependent reversible oxidation of D-threitol. Involved in the degradation pathway of D-threitol, that allows M.smegmatis to grow on this compound as the sole carbon source. Does not catalyze the oxidation of xylitol, L-sorbitol, and L-sorbose. This Mycolicibacterium smegmatis (strain ATCC 700084 / mc(2)155) (Mycobacterium smegmatis) protein is D-threitol dehydrogenase.